The chain runs to 1865 residues: Endoribonuclease Dicer (1865 aa).

In terms of domain architecture, Helicase ATP-binding spans 41-213 (LLEAALEHNT…DLEEKIQNLE (173 aa)). 54–61 (LNTGSGKT) lines the ATP pocket. Positions 161-164 (DECH) match the DECH box motif. A disordered region spans residues 397-417 (SWSDSEDDDEDEEAEAKEKTE). Positions 400–411 (DSEDDDEDEEAE) are enriched in acidic residues. In terms of domain architecture, Helicase C-terminal spans 419–588 (NFPSPFTNIL…SAECNDFELE (170 aa)). Residues 616–708 (AIGHVNRYCA…MPVGKETVKY (93 aa)) form the Dicer dsRNA-binding fold domain. The interval 713–732 (DLHDEEETSVPGRPGSTKRR) is disordered. Residues 881–1028 (KFMEDIEKSE…LVPELCAIHP (148 aa)) enclose the PAZ domain. Polar residues-rich tracts occupy residues 1111 to 1128 (GTSSDSNHTAPESCSMEV) and 1192 to 1201 (STQTTTSVSV). Disordered stretches follow at residues 1111-1142 (GTSSDSNHTAPESCSMEVSQPPEGAPNTPDEK) and 1190-1259 (DLST…DCRS). The segment covering 1240–1252 (SETATSTPAPSET) has biased composition (low complexity). The region spanning 1262–1385 (AGPAWDSPKT…TDKWDSDENK (124 aa)) is the RNase III 1 domain. Positions 1298, 1377, and 1380 each coordinate Mg(2+). A disordered region spans residues 1373–1417 (KSSTDKWDSDENKDLANGKASDDEDEDDDDEPEEAEVEPSKEDVN). Residues 1374 to 1388 (SSTDKWDSDENKDLA) are compositionally biased toward basic and acidic residues. A compositionally biased stretch (acidic residues) spans 1394–1409 (DDEDEDDDDEPEEAEV). The 159-residue stretch at 1609-1767 (FLNFESKINY…LAGAIYMDSG (159 aa)) folds into the RNase III 2 domain. Residues glutamate 1648, aspartate 1753, and glutamate 1756 each contribute to the Mg(2+) site. In terms of domain architecture, DRBM spans 1792-1857 (VPRSPVRELL…ARRALRSLKA (66 aa)).

Belongs to the helicase family. Dicer subfamily. Component of the RISC loading complex (RLC), or micro-RNA (miRNA) loading complex (miRLC), which is composed of dicer1, ago2 and tarbp2; dicer1 and tarbp2 are required to process precursor miRNAs (pre-miRNAs) to mature miRNAs and then load them onto ago2. Note that the trimeric RLC/miRLC is also referred to as RISC. The cofactor is Mg(2+). It depends on Mn(2+) as a cofactor.

Its subcellular location is the cytoplasm. The catalysed reaction is Endonucleolytic cleavage to 5'-phosphomonoester.. Functionally, double-stranded RNA (dsRNA) endoribonuclease playing a central role in short dsRNA-mediated post-transcriptional gene silencing. Cleaves naturally occurring long dsRNAs and short hairpin pre-microRNAs (miRNA) into fragments of twenty-one to twenty-three nucleotides with 3' overhang of two nucleotides, producing respectively short interfering RNAs (siRNA) and mature microRNAs. SiRNAs and miRNAs serve as guide to direct the RNA-induced silencing complex (RISC) to complementary RNAs to degrade them or prevent their translation. Gene silencing mediated by siRNAs, also called RNA interference, controls the elimination of transcripts from mobile and repetitive DNA elements of the genome but also the degradation of exogenous RNA of viral origin for instance. The miRNA pathway on the other side is a mean to specifically regulate the expression of target genes. This Danio rerio (Zebrafish) protein is Endoribonuclease Dicer (dicer1).